The chain runs to 121 residues: Outer membrane lipoprotein BBA14 (121 aa).

The first 19 residues, 1-19, serve as a signal peptide directing secretion; it reads MQIKNFPFLFLLNSLIIFS. The N-palmitoyl cysteine moiety is linked to residue Cys20. Cys20 carries the S-diacylglycerol cysteine lipid modification.

The protein resides in the cell outer membrane. In terms of biological role, outer membrane lipoprotein that could act as a component of a potential toxin-antitoxin system in B.burgdorferi which could serve as a plasmid stabilization mechanism in a growing bacterial population. This Borreliella burgdorferi (strain ATCC 35210 / DSM 4680 / CIP 102532 / B31) (Borrelia burgdorferi) protein is Outer membrane lipoprotein BBA14.